Here is a 95-residue protein sequence, read N- to C-terminus: Small ribosomal subunit protein bS6 (95 aa).

It belongs to the bacterial ribosomal protein bS6 family.

Binds together with bS18 to 16S ribosomal RNA. The sequence is that of Small ribosomal subunit protein bS6 (rpsF) from Halalkalibacterium halodurans (strain ATCC BAA-125 / DSM 18197 / FERM 7344 / JCM 9153 / C-125) (Bacillus halodurans).